The sequence spans 441 residues: Ribulose bisphosphate carboxylase large chain (441 aa).

N6,N6,N6-trimethyllysine is present on Lys-5. Substrate is bound by residues Asn-114 and Thr-164. Lys-166 serves as the catalytic Proton acceptor. Substrate is bound at residue Lys-168. Mg(2+) contacts are provided by Lys-192, Asp-194, and Glu-195. The residue at position 192 (Lys-192) is an N6-carboxylysine. His-285 (proton acceptor) is an active-site residue. The substrate site is built by Arg-286, His-318, and Ser-370.

Belongs to the RuBisCO large chain family. Type I subfamily. As to quaternary structure, heterohexadecamer of 8 large chains and 8 small chains; disulfide-linked. The disulfide link is formed within the large subunit homodimers. It depends on Mg(2+) as a cofactor. In terms of processing, the disulfide bond which can form in the large chain dimeric partners within the hexadecamer appears to be associated with oxidative stress and protein turnover.

It localises to the plastid. Its subcellular location is the chloroplast. It carries out the reaction 2 (2R)-3-phosphoglycerate + 2 H(+) = D-ribulose 1,5-bisphosphate + CO2 + H2O. It catalyses the reaction D-ribulose 1,5-bisphosphate + O2 = 2-phosphoglycolate + (2R)-3-phosphoglycerate + 2 H(+). Its function is as follows. RuBisCO catalyzes two reactions: the carboxylation of D-ribulose 1,5-bisphosphate, the primary event in carbon dioxide fixation, as well as the oxidative fragmentation of the pentose substrate in the photorespiration process. Both reactions occur simultaneously and in competition at the same active site. This chain is Ribulose bisphosphate carboxylase large chain, found in Argyrochosma delicatula (Delicate cloak fern).